The chain runs to 202 residues: Transcription factor IBH1 (202 aa).

The span at 1 to 16 (MDAKRTPPPPTPPNPN) shows a compositional bias: pro residues. The interval 1–33 (MDAKRTPPPPTPPNPNPSVIGSGAAADGGGFGR) is disordered. In terms of domain architecture, bHLH spans 136–185 (TSAAARAVPPPPRQQGEPPRAEALRRLVPGGAGMEYSSLLEETADYLRSL).

The protein belongs to the bHLH protein family. Interacts with ILI1. Binds to ILI5/BUL1 and BC1. Interacts with BCL1 and BCL2. In terms of tissue distribution, highly expressed in roots and at lower levels in leaf blades, leaf sheaths, lamina joint, stems and panicles.

Functionally, atypical and probable non DNA-binding bHLH transcription factor that acts as a negative regulator of cell elongation and plant development. Binds the transcription factor ILI1 and forms a heterodimer of antagonistic bHLH transcription factors that function downstream of BZR1 to mediate brassinosteroid regulation of cell elongation and lamina inclination. The sequence is that of Transcription factor IBH1 from Oryza sativa subsp. japonica (Rice).